The chain runs to 568 residues: Calcium-dependent protein kinase 5 (568 aa).

The Protein kinase domain maps to 125-379; it reads EIDRYKLGKG…VEQVLKHRWF (255 aa). Residues 131 to 139 and Lys-154 each bind ATP; that span reads LGKGSYGNV. The active-site Proton acceptor is Asp-245. The J domain autoinhibitory motif motif lies at 400–408; it reads KFKEFHKLC. The interval 400 to 435 is j domain; sequence KFKEFHKLCKIKKLAVTCIAYQLNEKDIGKLKKTFE. The short motif at 409–418 is the J domain EF-hand interaction motif element; that stretch reads KIKKLAVTCI. 4 EF-hand domains span residues 425–460, 462–495, 496–531, and 534–568; these read KDIG…NDNE, DREL…HSIF, QQDV…SAVQ, and FSKE…GVKE. The Ca(2+) site is built by Asp-438, Asn-440, Asp-442, Glu-449, Asp-473, Asp-475, Asn-477, Glu-484, Asp-509, Asp-511, Asp-513, Glu-520, Asp-547, Asn-549, Asp-551, and Glu-558.

This sequence belongs to the protein kinase superfamily. Ser/Thr protein kinase family. CDPK subfamily. The cofactor is Mg(2+). Post-translationally, may be palmitoylated. In terms of processing, autophosphorylated in vitro.

The protein resides in the cytoplasm. The protein localises to the cytoplasmic vesicle. It localises to the secretory vesicle. Its subcellular location is the microneme membrane. It is found in the cell membrane. It catalyses the reaction L-seryl-[protein] + ATP = O-phospho-L-seryl-[protein] + ADP + H(+). The catalysed reaction is L-threonyl-[protein] + ATP = O-phospho-L-threonyl-[protein] + ADP + H(+). Its activity is regulated as follows. Activated by calcium. Upon calcium binding to the EF-hand domains, the C-terminus of the junction domain (J domain) undergoes a conformational change which results in the dissociation of the pseudo-substrate inhibitory motif from the catalytic domain. This, in turn, may facilitate the autophosphorylation of the activation loop at Thr-285, which leads to the kinase activation. In terms of biological role, calcium-dependent protein kinase which acts as a sensor and effector of intracellular Ca(2+) levels probably in part downstream of cGMP-activated PKG kinase. Plays a central role in host erythrocytes and hepatocytes infection cycles. During the liver stage, involved in sporozoite motility and thus in sporozoite invasion of host hepatocytes, probably together with CDPK1 and CDPK4. Involved in merosome egress from host hepatocytes, probably together with CDPK4. Required for the release of hepatic merozoites from merosomes in the host blood stream. During the asexual blood stage, required for merozoite egress from host erythrocytes by triggering microneme secretion. Phosphorylates transporter NPT1 at late schizont stage. In Plasmodium falciparum (isolate 3D7), this protein is Calcium-dependent protein kinase 5.